The primary structure comprises 208 residues: Probable molybdenum cofactor guanylyltransferase (208 aa).

Residues 12-14 (IAG), lysine 24, aspartate 72, and aspartate 101 each bind GTP. Aspartate 101 is a Mg(2+) binding site.

The protein belongs to the MobA family. Requires Mg(2+) as cofactor.

The protein resides in the cytoplasm. It catalyses the reaction Mo-molybdopterin + GTP + H(+) = Mo-molybdopterin guanine dinucleotide + diphosphate. Its function is as follows. Transfers a GMP moiety from GTP to Mo-molybdopterin (Mo-MPT) cofactor (Moco or molybdenum cofactor) to form Mo-molybdopterin guanine dinucleotide (Mo-MGD) cofactor. This chain is Probable molybdenum cofactor guanylyltransferase, found in Chloroflexus aggregans (strain MD-66 / DSM 9485).